The following is a 600-amino-acid chain: Elongation factor 4 (600 aa).

A tr-type G domain is found at 5 to 187; it reads SRIRNFSIIA…AIVTRLPPPK (183 aa). GTP contacts are provided by residues 17–22 and 134–137; these read DHGKST and NKID.

It belongs to the TRAFAC class translation factor GTPase superfamily. Classic translation factor GTPase family. LepA subfamily.

It is found in the cell inner membrane. It catalyses the reaction GTP + H2O = GDP + phosphate + H(+). In terms of biological role, required for accurate and efficient protein synthesis under certain stress conditions. May act as a fidelity factor of the translation reaction, by catalyzing a one-codon backward translocation of tRNAs on improperly translocated ribosomes. Back-translocation proceeds from a post-translocation (POST) complex to a pre-translocation (PRE) complex, thus giving elongation factor G a second chance to translocate the tRNAs correctly. Binds to ribosomes in a GTP-dependent manner. In Rhodospirillum centenum (strain ATCC 51521 / SW), this protein is Elongation factor 4.